The chain runs to 386 residues: MGSIGAASTEFCFDMFKELKVHHVNENIIYSPLSIISILSMVFLGARENTKTQMEKVIHFDKITGFGESLESQCGTSVSVHASLKDILSEITKPSDNYSLSLASKLYAEETYPVLPEYLQCIKELYKGSLETVSFQTAADQARELINSWVETQTNGVIKNFLQPGSVDPQTEMVLVDAIYFKGTWEKAFKDEDTQEVPFRITEQESKPVQMMYQAGSFKVATVAAEKMKILELPYASGELSMFVLLPDDISGLEQLETTISIEKLSEWTSSNMMEDRKMKVYLPHMKIEEKYNLTSVLVALGMTDLFSPSANLSGISTAQTLKMSEAIHGAYVEIYEAGSEMATSTGVLVEAASVSEEFRVDHPFLFLIKHNPSNSILFFGRCIFP.

At Gly-2 the chain carries N-acetylglycine. At Ser-69 the chain carries Phosphoserine. Cys-74 and Cys-121 are joined by a disulfide. Asn-293 carries an N-linked (GlcNAc...) asparagine glycan. Ser-345 is modified (phosphoserine).

This sequence belongs to the serpin family. Ov-serpin subfamily. Post-translationally, the N-terminus is blocked.

Its subcellular location is the secreted. Its function is as follows. Storage protein of egg white. Lacks protease inhibitory activity. This Dromaius novaehollandiae (Emu) protein is Ovalbumin (SERPINB14).